Consider the following 339-residue polypeptide: Inositol 2-dehydrogenase 2 (339 aa).

This sequence belongs to the Gfo/Idh/MocA family. As to quaternary structure, homotetramer.

It carries out the reaction myo-inositol + NAD(+) = scyllo-inosose + NADH + H(+). In terms of biological role, involved in the oxidation of myo-inositol (MI) to 2-keto-myo-inositol (2KMI or 2-inosose). The chain is Inositol 2-dehydrogenase 2 from Saccharopolyspora erythraea (strain ATCC 11635 / DSM 40517 / JCM 4748 / NBRC 13426 / NCIMB 8594 / NRRL 2338).